The primary structure comprises 406 residues: MKLTTIPNEFKEAAPVIREINAQGFEAYFVGGSVRDALLNKPIHDVDIATSAYPEEIKQIFKRTVDVGIEHGTVLVLMEDQQYEVTTFRTESTYQDFRRPDEVTFVRSLKEDLKRRDFTINALALDSTGEIIDLFDGIEDLTNQTIRAVGNPHERFHEDALRMMRGLRFASQLDFKIEEKTLAAIAEFHPLLEKISVERITIEFVKMLLGVNRQGGLAPFIETECYQYCPKLREQGAGLFRLMDLPARQIETEAEAWTLLIQSLNLPEAEIRSFLKAWKLSNQLIQNVSQLVRGLRFRLSNDWQPMMLYELGEESAVLVERLLYYYQQESQVQVTKELVKALPIHQRHELAITGKDLLAVLEETPGKWLGELIAEIEQHVVEGSLENKQEVLLSFAKKQRSKGEKA.

Positions 32 and 35 each coordinate ATP. CTP contacts are provided by G32 and R35. Positions 45 and 47 each coordinate Mg(2+). Residues R116, D159, R162, R165, and R168 each coordinate ATP. CTP-binding residues include R116, D159, R162, R165, and R168.

It belongs to the tRNA nucleotidyltransferase/poly(A) polymerase family. Bacterial CCA-adding enzyme type 3 subfamily. As to quaternary structure, homodimer. The cofactor is Mg(2+).

It catalyses the reaction a tRNA precursor + 2 CTP + ATP = a tRNA with a 3' CCA end + 3 diphosphate. It carries out the reaction a tRNA with a 3' CCA end + 2 CTP + ATP = a tRNA with a 3' CCACCA end + 3 diphosphate. Catalyzes the addition and repair of the essential 3'-terminal CCA sequence in tRNAs without using a nucleic acid template. Adds these three nucleotides in the order of C, C, and A to the tRNA nucleotide-73, using CTP and ATP as substrates and producing inorganic pyrophosphate. tRNA 3'-terminal CCA addition is required both for tRNA processing and repair. Also involved in tRNA surveillance by mediating tandem CCA addition to generate a CCACCA at the 3' terminus of unstable tRNAs. While stable tRNAs receive only 3'-terminal CCA, unstable tRNAs are marked with CCACCA and rapidly degraded. The sequence is that of CCA-adding enzyme from Enterococcus faecalis (strain ATCC 700802 / V583).